The chain runs to 301 residues: GTPase Era (301 aa).

The region spanning R11–N180 is the Era-type G domain. The segment at G19 to S26 is G1. Residue G19–S26 participates in GTP binding. The segment at Q45–R49 is G2. The G3 stretch occupies residues D66–G69. GTP-binding positions include D66–I70 and T129–D132. Positions T129–D132 are G4. The G5 stretch occupies residues V159–A161. Residues L210–K286 enclose the KH type-2 domain.

It belongs to the TRAFAC class TrmE-Era-EngA-EngB-Septin-like GTPase superfamily. Era GTPase family. Monomer.

The protein localises to the cytoplasm. Its subcellular location is the cell membrane. Functionally, an essential GTPase that binds both GDP and GTP, with rapid nucleotide exchange. Plays a role in 16S rRNA processing and 30S ribosomal subunit biogenesis and possibly also in cell cycle regulation and energy metabolism. The polypeptide is GTPase Era (Tropheryma whipplei (strain TW08/27) (Whipple's bacillus)).